Here is a 391-residue protein sequence, read N- to C-terminus: Anhydro-N-acetylmuramic acid kinase (391 aa).

Residue 9–16 (GTSVDGID) participates in ATP binding.

Belongs to the anhydro-N-acetylmuramic acid kinase family.

It catalyses the reaction 1,6-anhydro-N-acetyl-beta-muramate + ATP + H2O = N-acetyl-D-muramate 6-phosphate + ADP + H(+). Its pathway is amino-sugar metabolism; 1,6-anhydro-N-acetylmuramate degradation. It participates in cell wall biogenesis; peptidoglycan recycling. In terms of biological role, catalyzes the specific phosphorylation of 1,6-anhydro-N-acetylmuramic acid (anhMurNAc) with the simultaneous cleavage of the 1,6-anhydro ring, generating MurNAc-6-P. Is required for the utilization of anhMurNAc either imported from the medium or derived from its own cell wall murein, and thus plays a role in cell wall recycling. In Gloeothece citriformis (strain PCC 7424) (Cyanothece sp. (strain PCC 7424)), this protein is Anhydro-N-acetylmuramic acid kinase.